The following is a 190-amino-acid chain: Elongation factor P-like protein (190 aa).

The protein belongs to the elongation factor P family.

The chain is Elongation factor P-like protein from Citrobacter koseri (strain ATCC BAA-895 / CDC 4225-83 / SGSC4696).